The sequence spans 209 residues: Large ribosomal subunit protein uL4 (209 aa).

The protein belongs to the universal ribosomal protein uL4 family. Part of the 50S ribosomal subunit.

One of the primary rRNA binding proteins, this protein initially binds near the 5'-end of the 23S rRNA. It is important during the early stages of 50S assembly. It makes multiple contacts with different domains of the 23S rRNA in the assembled 50S subunit and ribosome. Its function is as follows. Forms part of the polypeptide exit tunnel. The chain is Large ribosomal subunit protein uL4 from Borrelia duttonii (strain Ly).